Reading from the N-terminus, the 184-residue chain is Acireductone dioxygenase (184 aa).

Residues His87, His89, Glu93, and His137 each contribute to the Fe(2+) site. Residues His87, His89, Glu93, and His137 each coordinate Ni(2+).

Belongs to the acireductone dioxygenase (ARD) family. It depends on Fe(2+) as a cofactor. Ni(2+) is required as a cofactor.

Its subcellular location is the cytoplasm. The protein localises to the nucleus. The enzyme catalyses 1,2-dihydroxy-5-(methylsulfanyl)pent-1-en-3-one + O2 = 4-methylsulfanyl-2-oxobutanoate + formate + 2 H(+). It carries out the reaction 1,2-dihydroxy-5-(methylsulfanyl)pent-1-en-3-one + O2 = 3-(methylsulfanyl)propanoate + CO + formate + 2 H(+). Its pathway is amino-acid biosynthesis; L-methionine biosynthesis via salvage pathway; L-methionine from S-methyl-5-thio-alpha-D-ribose 1-phosphate: step 5/6. Catalyzes 2 different reactions between oxygen and the acireductone 1,2-dihydroxy-3-keto-5-methylthiopentene (DHK-MTPene) depending upon the metal bound in the active site. Fe-containing acireductone dioxygenase (Fe-ARD) produces formate and 2-keto-4-methylthiobutyrate (KMTB), the alpha-ketoacid precursor of methionine in the methionine recycle pathway. Ni-containing acireductone dioxygenase (Ni-ARD) produces methylthiopropionate, carbon monoxide and formate, and does not lie on the methionine recycle pathway. The protein is Acireductone dioxygenase of Ciona intestinalis (Transparent sea squirt).